The chain runs to 417 residues: Hyaluronidase-3 (417 aa).

Positions 1–20 are cleaved as a signal peptide; that stretch reads MTTQLGPALVLGVALCLGCG. Intrachain disulfides connect C42-C331, C205-C220, C356-C367, C361-C395, and C397-C406. N-linked (GlcNAc...) asparagine glycosylation is present at N69. E129 serves as the catalytic Proton donor. A glycan (N-linked (GlcNAc...) asparagine) is linked at N215. The EGF-like domain occupies 352-407; sequence AAMACSHQRCHGHGRCARRDPGQMEAFLHLWPDGSLGDWKSFSCHCYWGWAGPTCQ.

It belongs to the glycosyl hydrolase 56 family. Post-translationally, N-glycosylated. As to expression, expressed in sperm. Highly expressed in epidermis of the skin, where it is expressed intracellularily in the deep horny layer (at protein level). Bone marrow, testis and kidney.

It localises to the secreted. It is found in the cell membrane. The protein localises to the cytoplasmic vesicle. Its subcellular location is the secretory vesicle. The protein resides in the acrosome. It localises to the endoplasmic reticulum. It is found in the early endosome. The enzyme catalyses Random hydrolysis of (1-&gt;4)-linkages between N-acetyl-beta-D-glucosamine and D-glucuronate residues in hyaluronate.. Functionally, facilitates sperm penetration into the layer of cumulus cells surrounding the egg by digesting hyaluronic acid. Involved in induction of the acrosome reaction in the sperm. Involved in follicular atresia, the breakdown of immature ovarian follicles that are not selected to ovulate. Induces ovarian granulosa cell apoptosis, possibly via apoptotic signaling pathway involving CASP8 and CASP3 activation, and poly(ADP-ribose) polymerase (PARP) cleavage. Has no hyaluronidase activity in embryonic fibroblasts in vitro. Has no hyaluronidase activity in granulosa cells in vitro. The chain is Hyaluronidase-3 (HYAL3) from Homo sapiens (Human).